A 441-amino-acid chain; its full sequence is N-succinylarginine dihydrolase (441 aa).

Substrate is bound by residues 19 to 28 (AGLSFGNEAS), asparagine 110, and 137 to 138 (HR). Residue glutamate 174 is part of the active site. Arginine 212 serves as a coordination point for substrate. The active site involves histidine 248. Substrate-binding residues include aspartate 250 and asparagine 359. Cysteine 365 serves as the catalytic Nucleophile.

The protein belongs to the succinylarginine dihydrolase family. Homodimer.

It catalyses the reaction N(2)-succinyl-L-arginine + 2 H2O + 2 H(+) = N(2)-succinyl-L-ornithine + 2 NH4(+) + CO2. It functions in the pathway amino-acid degradation; L-arginine degradation via AST pathway; L-glutamate and succinate from L-arginine: step 2/5. In terms of biological role, catalyzes the hydrolysis of N(2)-succinylarginine into N(2)-succinylornithine, ammonia and CO(2). This chain is N-succinylarginine dihydrolase, found in Cronobacter sakazakii (strain ATCC BAA-894) (Enterobacter sakazakii).